The primary structure comprises 52 residues: UPF0057 membrane protein PA0567 (52 aa).

2 helical membrane passes run 6–26 (ILIAILLPPLGVFLQVGFGGA) and 29–49 (LNILLTLLGYIPGIVHAVYII).

It belongs to the UPF0057 (PMP3) family.

Its subcellular location is the cell membrane. In Pseudomonas aeruginosa (strain ATCC 15692 / DSM 22644 / CIP 104116 / JCM 14847 / LMG 12228 / 1C / PRS 101 / PAO1), this protein is UPF0057 membrane protein PA0567.